A 338-amino-acid chain; its full sequence is Fructose-1,6-bisphosphatase class 1 (338 aa).

Positions 90, 112, 114, and 115 each coordinate Mg(2+). Residues 115–118 (DGSS), Asn207, and Lys273 each bind substrate. Mg(2+) is bound at residue Glu279.

Belongs to the FBPase class 1 family. Homotetramer. The cofactor is Mg(2+).

It is found in the cytoplasm. The enzyme catalyses beta-D-fructose 1,6-bisphosphate + H2O = beta-D-fructose 6-phosphate + phosphate. Its pathway is carbohydrate biosynthesis; gluconeogenesis. The sequence is that of Fructose-1,6-bisphosphatase class 1 from Xanthomonas campestris pv. campestris (strain 8004).